Consider the following 208-residue polypeptide: NAD(P)H dehydrogenase (quinone) (208 aa).

The 189-residue stretch at 4–192 (VLVLYYSSYG…DGARFQGRHV (189 aa)) folds into the Flavodoxin-like domain. FMN contacts are provided by residues 10 to 15 (SSYGHV) and 78 to 80 (TRF). Tyr-12 provides a ligand contact to NAD(+). Trp-98 is a binding site for substrate. FMN contacts are provided by residues 113 to 119 (STGSQHG) and His-134. The tract at residues 161–183 (YGASTLADDGDGGDRQPSANELD) is disordered.

Belongs to the WrbA family. FMN serves as cofactor.

It catalyses the reaction a quinone + NADH + H(+) = a quinol + NAD(+). The catalysed reaction is a quinone + NADPH + H(+) = a quinol + NADP(+). This chain is NAD(P)H dehydrogenase (quinone), found in Paracoccus denitrificans (strain Pd 1222).